The sequence spans 350 residues: Neurogenic differentiation factor 1 (350 aa).

The interval 1–91 (MTKSYSEESM…KKKKMTKARM (91 aa)) is disordered. A compositionally biased stretch (low complexity) spans 7 to 18 (EESMMLESQSSS). Over residues 22–38 (DKCHSSSQDERDVDKTS) the composition is skewed to basic and acidic residues. Residues 44-72 (DMEDDDDAGLNRLEDEDDEEEEEEEEDGD) show a composition bias toward acidic residues. Positions 76–91 (PKRRGPKKKKMTKARM) are enriched in basic residues. The Nuclear localization signal motif lies at 82-88 (KKKKMTK). The region spanning 96-148 (MRRMKANARERNRMHGLNDALESLRKVVPCYSKTQKLSKIETLRLAKNYIWAL) is the bHLH domain.

As to quaternary structure, efficient DNA binding requires dimerization with another bHLH protein. As to expression, in the embryo, expressed broadly in a subset of primary neurons in the brain and spinal cord. At 28 hours post-fertilization (hpf), regions of expression include telencephalon, olfactory placode, epiphysis, cranial ganglia, acoustic ganglia, Rohon-Beard mechano-sensory neurons and motoneurons. In 2 day postembryonic brain, expressed in many brain regions but absent from subpallium, the ventral preoptic region, ventral thalamus and hypothalamus; sites of expression extend laterally from the ventricular proliferative regions and correspond to freshly determined cell populations. In adult, expressed in all tissues examined with highest levels in brain.

The protein resides in the cytoplasm. Its subcellular location is the nucleus. Functionally, may act as a transcriptional activator. Differentiation factor required for neurogenesis. Acts as an upstream activator of isl1. The polypeptide is Neurogenic differentiation factor 1 (Danio rerio (Zebrafish)).